Consider the following 362-residue polypeptide: N-alpha-acetyltransferase 30 (362 aa).

The span at 1 to 20 shows a compositional bias: pro residues; the sequence is MAEVPPGPSSLLPPPAPPAP. Disordered regions lie at residues 1–26, 38–88, and 113–182; these read MAEVPPGPSSLLPPPAPPAPAAVEPR, CSED…NGLI, and ATTA…EEDE. Phosphoserine is present on residues S39 and S55. Positions 39–48 are enriched in acidic residues; sequence SEDEEDDEEH. T117 bears the Phosphothreonine mark. The span at 149–165 shows a compositional bias: low complexity; the sequence is AVPSPVEAAAASDPAAA. S152 carries the phosphoserine modification. Residues 173–182 are compositionally biased toward acidic residues; sequence TEQEEEEEDE. S190, S196, and S199 each carry phosphoserine. In terms of domain architecture, N-acetyltransferase spans 214–362; the sequence is RYVRYESELQ…DALRLKLWLR (149 aa). K233 bears the N6-acetyllysine mark.

Belongs to the acetyltransferase family. MAK3 subfamily. Component of the N-terminal acetyltransferase C (NatC) complex, which is composed of NAA35, NAA38 and NAA30.

It localises to the cytoplasm. The protein resides in the nucleus. The catalysed reaction is N-terminal L-methionyl-L-leucyl-[protein] + acetyl-CoA = N-terminal N(alpha)-acetyl-L-methionyl-L-leucyl-[protein] + CoA + H(+). It catalyses the reaction N-terminal L-methionyl-L-isoleucyl-[protein] + acetyl-CoA = N-terminal N(alpha)-acetyl-L-methionyl-L-isoleucyl-[protein] + CoA + H(+). The enzyme catalyses N-terminal L-methionyl-L-phenylalanyl-[protein] + acetyl-CoA = N-terminal N(alpha)-acetyl-L-methionyl-L-phenylalanyl-[protein] + CoA + H(+). It carries out the reaction N-terminal L-methionyl-L-tryptophyl-[protein] + acetyl-CoA = N-terminal N(alpha)-acetyl-L-methionyl-L-tryptophyl-[protein] + CoA + H(+). The catalysed reaction is N-terminal L-methionyl-L-tyrosyl-[protein] + acetyl-CoA = N-terminal N(alpha)-acetyl-L-methionyl-L-tyrosyl-[protein] + CoA + H(+). Its function is as follows. Catalytic subunit of the N-terminal acetyltransferase C (NatC) complex. Catalyzes acetylation of the N-terminal methionine residues of peptides beginning with Met-Leu-Ala and Met-Leu-Gly. N-terminal acetylation protects proteins from ubiquitination and degradation by the N-end rule pathway. Necessary for the lysosomal localization and function of ARL8B sugeesting that ARL8B is a NatC substrate. The protein is N-alpha-acetyltransferase 30 (NAA30) of Homo sapiens (Human).